The chain runs to 259 residues: Deoxyribose-phosphate aldolase (259 aa).

Catalysis depends on D101, which acts as the Proton donor/acceptor. The Schiff-base intermediate with acetaldehyde role is filled by K166. K200 functions as the Proton donor/acceptor in the catalytic mechanism.

This sequence belongs to the DeoC/FbaB aldolase family. DeoC type 2 subfamily.

It is found in the cytoplasm. It catalyses the reaction 2-deoxy-D-ribose 5-phosphate = D-glyceraldehyde 3-phosphate + acetaldehyde. It functions in the pathway carbohydrate degradation; 2-deoxy-D-ribose 1-phosphate degradation; D-glyceraldehyde 3-phosphate and acetaldehyde from 2-deoxy-alpha-D-ribose 1-phosphate: step 2/2. Functionally, catalyzes a reversible aldol reaction between acetaldehyde and D-glyceraldehyde 3-phosphate to generate 2-deoxy-D-ribose 5-phosphate. In Glaesserella parasuis serovar 5 (strain SH0165) (Haemophilus parasuis), this protein is Deoxyribose-phosphate aldolase.